We begin with the raw amino-acid sequence, 335 residues long: Hsp90 co-chaperone Cdc37-like 1 (335 aa).

Residues 1–11 (MEQPWPPPGPW) are compositionally biased toward pro residues. A disordered region spans residues 1 to 42 (MEQPWPPPGPWSFPRTGGETEEESDLDVSPSSSHYSPVPDGG). Residues 2–170 (EQPWPPPGPW…YEQKIRHFGM (169 aa)) form a self-association region. Low complexity predominate over residues 27–40 (DVSPSSSHYSPVPD). Ser-32 and Ser-88 each carry phosphoserine. The stretch at 84 to 120 (HNSESLDQEHAKAQTAVSELRQREEEWRQKEEALVQR) forms a coiled coil. Residues 147–276 (KTEDEDKSQS…ARVRLYAQSQ (130 aa)) form a self-association and interaction with Hsp90 region. The segment at 266-335 (KARVRLYAQS…EDDDRMMDTV (70 aa)) is interaction with Hsp70. Positions 277 to 335 (SFAPVTVENHAPHSGVGCIGSAEPLPQNPDSLQCCPPAPLCSVDSVVHKEDDDRMMDTV) are required for interaction with STIP1.

Belongs to the CDC37 family. As to quaternary structure, self-associates. Forms complexes with Hsp70 and Hsp90. Interacts with CDC37, FKBP4, PPID and STIP1.

The protein localises to the cytoplasm. In terms of biological role, co-chaperone that binds to numerous proteins and promotes their interaction with Hsp70 and Hsp90. This chain is Hsp90 co-chaperone Cdc37-like 1 (Cdc37l1), found in Rattus norvegicus (Rat).